A 1515-amino-acid chain; its full sequence is MESLSNLGNAMSSVLSETTSTTATAILADPTEALSSVVALASDAVSKATSDVVPEHTPTSWFTIILWLLHRISSVLYFVIKLTTITTPTFLFNIFSTSLTVTMNATTLVLIMLFMMAGVTWVVRYRYLNMYSRLPPEPQRKEPAVDLFPETQEEGVKSGLASYFDEFLSAIKIFGYLERPVFHELTRSMQTRKLIAGETLNLEEEQGFCLVVDGMVEIFVKSARDGRRSSSGPSFESDDEEGFAPGRQRYQLLTEVRNGAPMSSLFSIMSLFTEDIQMHDTDDDDSPDPTPSAPGTAMPGYPMNANFQQSNDTLPSIPGTPLSDNHVMQRGMASAESLTMSPLAHDSSRIPSLSLVNTRPAVPRRPVPKRLNTTSAHPDIIARATVDTTIAIIPASAFRRLIKIYPKATAHIVHVILSRFQRVTLATAYNYLGLSGEVLQMERNILKHTVRQLPNHLRGDALDRLKEKFKRERERIGEKEVEKGIALHNAHAARRRRSAASLRKEVALQAYSKRRQSIVTATPAFGTRRERPSPDMPSPGDLLTNTQQLKSGPASQLDLARDATSPRPQRNLSPFSTPRNAHVSLDTREALDEDDMFRESVLECMFRAIGLTGNGSVNPDSTQASPRFVPTDQRRSRGGPGHTAFGFMDAFDPFDNDTESVTSCGFSSSSPVPNPQLLAHDMKDEVEIVFFPKGSVLVEQGERNPGLYYVIDGFLDICVPGDDSSHDLLQSSAKVDHGHDSATGADAFGANSSRFPEPNMNNNFGAEQKKGKQGRRSVALIKPGGLAGYVGTISSYRSFIDVVARTDVCVGFLPLASIDRIVDRYPIVMLTMAKRLTELLPRLLLHIDFALEWVQVNSGQVLFREGDESEAIYLVLNGRLRLVEDQKDGGMNVKAEFGQGESIGELEVLTESARTGTLHAIRETELVKFPRTLFNSLAQEHPNITIKISKIIAARMRAFIDDPSRMGLKDNVVRSYKSSSTLNLRTVAILPVTAGVPVVEFGNRLMNALSQVGPPNGATCLNQAAILNHLGKLAFNRMGKLKLSQYLADLEEKYGLVVYVADTNVNTPWTQTCITQADCLLFVGLADSSPEIGEYERFMLGMKSTARKILVLVHQERYSNPGLTRQWLKNRMWINGGHFHVQMAYTSNTVPIHPPTKRFGPSLKQRVQILQAEIQKYTSRKVRHVPFYSPDAPFKGDFHRLARRLCGKSVGLVLGGGGARGIAHVGIIRAMEEAGIPIDMVGGTSIGAFIGGLYARHADVVPIFGLAKKFAGRMASMWRFAFDLTYPSASYTTGHEFNRGIFKTFGKTQIEDFWLEYYCNTTNISKSRVEFHTSGYAWRYIRASMSLAGLLPPLCDEGSMLLDGGYIDNLTVSRMKSLGSDVIFAVDVGSLDDNTPQAFGDSLSGVWAFFNRWNPFSSVPNPPTLAEIQARLAYVSSVGELERAKTMPGCIYMRPPIDDYGTLDFGKFDEIYGVGYKYGQEFLQKLREQGVLPLVEETEAKKALRRTMAPRRASI.

Residues 1–59 (MESLSNLGNAMSSVLSETTSTTATAILADPTEALSSVVALASDAVSKATSDVVPEHTPT) lie on the Cytoplasmic side of the membrane. A helical membrane pass occupies residues 60–80 (SWFTIILWLLHRISSVLYFVI). Topologically, residues 81–102 (KLTTITTPTFLFNIFSTSLTVT) are lumenal. The chain crosses the membrane as a helical span at residues 103–123 (MNATTLVLIMLFMMAGVTWVV). Over 124-1515 (RYRYLNMYSR…RTMAPRRASI (1392 aa)) the chain is Cytoplasmic. Disordered regions lie at residues 278-303 (MHDT…GYPM), 519-580 (VTAT…TPRN), and 617-639 (VNPD…SRGG). 2 stretches are compositionally biased toward polar residues: residues 543 to 554 (LTNTQQLKSGPA) and 566 to 579 (PRPQ…STPR). A nucleoside 3',5'-cyclic phosphate contacts are provided by residues 670 to 789 (SPVP…LAGY) and 835 to 955 (RLTE…IAAR). The PNPLA domain occupies 1212-1376 (LVLGGGGARG…IDNLTVSRMK (165 aa)). Residues 1216-1221 (GGGARG) carry the GXGXXG motif. The GXSXG signature appears at 1243 to 1247 (GTSIG). S1245 functions as the Nucleophile in the catalytic mechanism. D1363 serves as the catalytic Proton acceptor. Positions 1363–1365 (DGG) match the DGA/G motif.

The protein belongs to the NTE family.

It localises to the endoplasmic reticulum membrane. It catalyses the reaction a 1-acyl-sn-glycero-3-phosphocholine + H2O = sn-glycerol 3-phosphocholine + a fatty acid + H(+). Its activity is regulated as follows. Inhibited by organophosphorus esters. Intracellular phospholipase B that catalyzes the double deacylation of phosphatidylcholine (PC) to glycerophosphocholine (GroPCho). Plays an important role in membrane lipid homeostasis. Responsible for the rapid PC turnover in response to inositol, elevated temperatures, or when choline is present in the growth medium. The polypeptide is Lysophospholipase nte1 (nte1) (Neurospora crassa (strain ATCC 24698 / 74-OR23-1A / CBS 708.71 / DSM 1257 / FGSC 987)).